We begin with the raw amino-acid sequence, 375 residues long: MKTKGALIWEFNQPWSVEEIEIGDPRKDEVKIQMEAAGMCRSDHHLVTGDIPMAGFPVLGGHEGAGIVTEVGPGVDDFAPGDHVVLAFIPSCGKCPSCQAGMRNLCDLGAGLLAGESVTDGSFRIQARGQNVYPMTLLGTFSPYMVVHRSSVVKIDPSVPFEVACLVGCGVTTGYGSAVRTADVRPGDDVAIVGLGGVGMAALQGAVSAGARYVFAVEPVEWKRDQALKFGATHVYPDINAALMGIAEVTYGLMAQKVIITVGKLDGADVDSYLTITAKGGTCVLTAIGSLVDTQVTLNLAMLTLLQKNIQGTIFGGGNPHYDIPKLLSMYKAGKLNLDDMVTTAYKLEQINDGYQDMLNGKNIRGVIRYTDDDR.

Residues cysteine 40, histidine 62, cysteine 92, cysteine 95, cysteine 98, cysteine 106, and cysteine 169 each contribute to the Zn(2+) site.

This sequence belongs to the zinc-containing alcohol dehydrogenase family. Requires Zn(2+) as cofactor.

Its subcellular location is the cytoplasm. The enzyme catalyses a primary alcohol + NAD(+) = an aldehyde + NADH + H(+). It catalyses the reaction a secondary alcohol + NAD(+) = a ketone + NADH + H(+). The protein is Alcohol dehydrogenase B (adhB) of Mycobacterium bovis (strain ATCC BAA-935 / AF2122/97).